The following is a 222-amino-acid chain: Cytochrome b6 (222 aa).

A helical membrane pass occupies residues 39-59 (IFYCLGGITLVCFIIQFATGF). Cysteine 42 serves as a coordination point for heme c. The heme b site is built by histidine 93 and histidine 107. Helical transmembrane passes span 97–117 (ASMMVLMMILHVFRVYLTGGF), 123–143 (LTWITGVILAVITVSFGVTGY), and 193–213 (LHTFVLPWFIAVFMLMHFLMI). The heme b site is built by histidine 194 and histidine 209.

It belongs to the cytochrome b family. PetB subfamily. As to quaternary structure, the 4 large subunits of the cytochrome b6-f complex are cytochrome b6, subunit IV (17 kDa polypeptide, PetD), cytochrome f and the Rieske protein, while the 4 small subunits are PetG, PetL, PetM and PetN. The complex functions as a dimer. The cofactor is heme b. Requires heme c as cofactor.

The protein resides in the cellular thylakoid membrane. Its function is as follows. Component of the cytochrome b6-f complex, which mediates electron transfer between photosystem II (PSII) and photosystem I (PSI), cyclic electron flow around PSI, and state transitions. This is Cytochrome b6 from Prochlorothrix hollandica.